The following is a 490-amino-acid chain: GTPase Der (490 aa).

EngA-type G domains follow at residues 3-166 (PVVA…MEDL) and 203-376 (IKLA…DSST). GTP-binding positions include 9–16 (GRPNVGKS), 56–60 (DTGGI), 118–121 (NKTD), 209–216 (GRPNVGKS), 256–260 (DTAGV), and 321–324 (NKWD). In terms of domain architecture, KH-like spans 377–461 (RRVGTSMLTR…PIRIQFKEGE (85 aa)).

It belongs to the TRAFAC class TrmE-Era-EngA-EngB-Septin-like GTPase superfamily. EngA (Der) GTPase family. As to quaternary structure, associates with the 50S ribosomal subunit.

GTPase that plays an essential role in the late steps of ribosome biogenesis. This is GTPase Der from Escherichia coli O81 (strain ED1a).